Consider the following 236-residue polypeptide: CDP-diacylglycerol--glycerol-3-phosphate 3-phosphatidyltransferase (236 aa).

A run of 5 helical transmembrane segments spans residues Ile-39–Ala-59, Ile-66–Ile-86, Val-120–Val-140, Trp-163–Trp-183, and Gly-196–Trp-216.

This sequence belongs to the CDP-alcohol phosphatidyltransferase class-I family.

Its subcellular location is the cell membrane. The catalysed reaction is a CDP-1,2-diacyl-sn-glycerol + sn-glycerol 3-phosphate = a 1,2-diacyl-sn-glycero-3-phospho-(1'-sn-glycero-3'-phosphate) + CMP + H(+). It participates in phospholipid metabolism; phosphatidylglycerol biosynthesis; phosphatidylglycerol from CDP-diacylglycerol: step 1/2. Its function is as follows. This protein catalyzes the committed step to the synthesis of the acidic phospholipids. The protein is CDP-diacylglycerol--glycerol-3-phosphate 3-phosphatidyltransferase (pgsA) of Mycoplasma genitalium (strain ATCC 33530 / DSM 19775 / NCTC 10195 / G37) (Mycoplasmoides genitalium).